A 93-amino-acid chain; its full sequence is Large ribosomal subunit protein uL23cz/uL23cy (93 aa).

Belongs to the universal ribosomal protein uL23 family. In terms of assembly, part of the 50S ribosomal subunit.

It localises to the plastid. The protein resides in the chloroplast. Binds to 23S rRNA. In Nandina domestica (Heavenly bamboo), this protein is Large ribosomal subunit protein uL23cz/uL23cy (rpl23-A).